The sequence spans 107 residues: Iron-binding protein IscA (107 aa).

Cys35, Cys99, and Cys101 together coordinate Fe cation.

The protein belongs to the HesB/IscA family. In terms of assembly, homodimer; may form tetramers and higher multimers. Fe cation is required as a cofactor.

Is able to transfer iron-sulfur clusters to apo-ferredoxin. Multiple cycles of [2Fe2S] cluster formation and transfer are observed, suggesting that IscA acts catalytically. Recruits intracellular free iron so as to provide iron for the assembly of transient iron-sulfur cluster in IscU in the presence of IscS, L-cysteine and the thioredoxin reductase system TrxA/TrxB. This Enterobacter sp. (strain 638) protein is Iron-binding protein IscA.